A 222-amino-acid polypeptide reads, in one-letter code: N-(5'-phosphoribosyl)anthranilate isomerase (222 aa).

The protein belongs to the TrpF family.

The enzyme catalyses N-(5-phospho-beta-D-ribosyl)anthranilate = 1-(2-carboxyphenylamino)-1-deoxy-D-ribulose 5-phosphate. The protein operates within amino-acid biosynthesis; L-tryptophan biosynthesis; L-tryptophan from chorismate: step 3/5. The chain is N-(5'-phosphoribosyl)anthranilate isomerase from Beijerinckia indica subsp. indica (strain ATCC 9039 / DSM 1715 / NCIMB 8712).